Reading from the N-terminus, the 620-residue chain is Probably inactive leucine-rich repeat receptor-like protein kinase At5g48380 (620 aa).

A signal peptide spans 1-27 (MMMGRLVFVIWLYNCLCLLLLSSLVDA). The Extracellular segment spans residues 28–228 (DQANIDCLRT…SASSSRGKVV (201 aa)). N-linked (GlcNAc...) asparagine glycans are attached at residues asparagine 56, asparagine 111, asparagine 119, and asparagine 147. LRR repeat units follow at residues 101 to 124 (DLTG…STLI), 126 to 148 (LVTI…ISNI), 150 to 172 (FLNT…LAQL), and 174 to 196 (RLKT…NQTL). An N-linked (GlcNAc...) asparagine glycan is attached at asparagine 193. Residues 229–249 (IIAAVGGLTAAALVVGVVLFF) traverse the membrane as a helical segment. The Cytoplasmic segment spans residues 250-620 (YFRKLGAVRK…DFIEELIVAR (371 aa)). At threonine 300 the chain carries Phosphothreonine. A Protein kinase domain is found at 303–596 (FKKDNIIATG…RAIGESYNFT (294 aa)). Residues 309-317 (IATGRTGTM) and lysine 331 contribute to the ATP site. Threonine 463 is subject to Phosphothreonine. Tyrosine 479 bears the Phosphotyrosine mark. Residue threonine 482 is modified to Phosphothreonine.

Belongs to the protein kinase superfamily. Ser/Thr protein kinase family.

Its subcellular location is the cell membrane. The chain is Probably inactive leucine-rich repeat receptor-like protein kinase At5g48380 from Arabidopsis thaliana (Mouse-ear cress).